The chain runs to 291 residues: ATP synthase gamma chain (291 aa).

Belongs to the ATPase gamma chain family. As to quaternary structure, F-type ATPases have 2 components, CF(1) - the catalytic core - and CF(0) - the membrane proton channel. CF(1) has five subunits: alpha(3), beta(3), gamma(1), delta(1), epsilon(1). CF(0) has three main subunits: a, b and c.

It is found in the cell inner membrane. Functionally, produces ATP from ADP in the presence of a proton gradient across the membrane. The gamma chain is believed to be important in regulating ATPase activity and the flow of protons through the CF(0) complex. The protein is ATP synthase gamma chain of Neisseria gonorrhoeae (strain ATCC 700825 / FA 1090).